The chain runs to 200 residues: Small ribosomal subunit protein uS4 (200 aa).

Positions 22–43 (TGKELQKRPYPPGQHGPSQRRK) are disordered. The S4 RNA-binding domain occupies 92–152 (SRLDNLVYRL…EKSRNLQVIK (61 aa)).

The protein belongs to the universal ribosomal protein uS4 family. In terms of assembly, part of the 30S ribosomal subunit. Contacts protein S5. The interaction surface between S4 and S5 is involved in control of translational fidelity.

Its function is as follows. One of the primary rRNA binding proteins, it binds directly to 16S rRNA where it nucleates assembly of the body of the 30S subunit. With S5 and S12 plays an important role in translational accuracy. The protein is Small ribosomal subunit protein uS4 of Geobacillus sp. (strain WCH70).